Reading from the N-terminus, the 604-residue chain is Elongation factor 4 (604 aa).

Positions 7-189 (KNIRNFCIIA…QIVTKIPAPS (183 aa)) constitute a tr-type G domain. Residues 19 to 24 (DHGKST) and 136 to 139 (NKID) each bind GTP.

The protein belongs to the TRAFAC class translation factor GTPase superfamily. Classic translation factor GTPase family. LepA subfamily.

The protein resides in the cell membrane. The enzyme catalyses GTP + H2O = GDP + phosphate + H(+). Required for accurate and efficient protein synthesis under certain stress conditions. May act as a fidelity factor of the translation reaction, by catalyzing a one-codon backward translocation of tRNAs on improperly translocated ribosomes. Back-translocation proceeds from a post-translocation (POST) complex to a pre-translocation (PRE) complex, thus giving elongation factor G a second chance to translocate the tRNAs correctly. Binds to ribosomes in a GTP-dependent manner. This is Elongation factor 4 from Lachnospira eligens (strain ATCC 27750 / DSM 3376 / VPI C15-48 / C15-B4) (Eubacterium eligens).